A 380-amino-acid chain; its full sequence is 3-isopropylmalate dehydrogenase (380 aa).

NAD(+) is bound at residue 79–90 (GPEWAGVHPTPE). Substrate is bound by residues Arg97, Arg107, Arg136, and Asp229. Positions 229, 254, and 258 each coordinate Mg(2+). NAD(+) is bound at residue 294 to 306 (GSAPDISGKGLAN).

This sequence belongs to the isocitrate and isopropylmalate dehydrogenases family. As to quaternary structure, homodimer. The cofactor is Mg(2+). Mn(2+) serves as cofactor.

It is found in the cytoplasm. The catalysed reaction is (2R,3S)-3-isopropylmalate + NAD(+) = 4-methyl-2-oxopentanoate + CO2 + NADH. It functions in the pathway amino-acid biosynthesis; L-leucine biosynthesis; L-leucine from 3-methyl-2-oxobutanoate: step 3/4. In terms of biological role, catalyzes the oxidation of 3-carboxy-2-hydroxy-4-methylpentanoate (3-isopropylmalate) to 3-carboxy-4-methyl-2-oxopentanoate. The product decarboxylates to 4-methyl-2 oxopentanoate. The chain is 3-isopropylmalate dehydrogenase (LEU2) from Hapsidospora chrysogena (Acremonium chrysogenum).